The sequence spans 194 residues: Naphthalene 1,2-dioxygenase system, small oxygenase component (194 aa).

It belongs to the bacterial ring-hydroxylating dioxygenase beta subunit family. The naphthalene dioxygenase (NDO) multicomponent enzyme system is composed of an electron transfer component and a dioxygenase component (iron sulfur protein (ISP)). The electron transfer component is composed of a ferredoxin reductase (NagAa) and a ferredoxin (NagAb), and the dioxygenase component is formed by a large alpha subunit (NagAc) and a small beta subunit (NagAd).

The protein operates within aromatic compound metabolism; naphthalene degradation. In terms of biological role, component of the naphthalene dioxygenase (NDO) multicomponent enzyme system which catalyzes the incorporation of both atoms of molecular oxygen into naphthalene to form cis-(1R,2S)-dihydroxy-1,2-dihydronaphthalene. Also able to use styrene as substrate. The beta subunit seems to have a structural role in the holoenzyme. This Ralstonia sp protein is Naphthalene 1,2-dioxygenase system, small oxygenase component.